Consider the following 945-residue polypeptide: Leucine--tRNA ligase (945 aa).

The 'HIGH' region signature appears at 43 to 53; it reads PYPNGAIHIGH. The 'KMSKS' region signature appears at 638-642; the sequence is KMSKS. Position 641 (K641) interacts with ATP.

Belongs to the class-I aminoacyl-tRNA synthetase family.

The protein resides in the cytoplasm. The catalysed reaction is tRNA(Leu) + L-leucine + ATP = L-leucyl-tRNA(Leu) + AMP + diphosphate. This is Leucine--tRNA ligase from Pyrobaculum neutrophilum (strain DSM 2338 / JCM 9278 / NBRC 100436 / V24Sta) (Thermoproteus neutrophilus).